Reading from the N-terminus, the 429-residue chain is UDP-N-acetylglucosamine 1-carboxyvinyltransferase (429 aa).

22 to 23 (KN) contributes to the phosphoenolpyruvate binding site. Arg-102 contributes to the UDP-N-acetyl-alpha-D-glucosamine binding site. Cys-126 functions as the Proton donor in the catalytic mechanism. The residue at position 126 (Cys-126) is a 2-(S-cysteinyl)pyruvic acid O-phosphothioketal. Residues 131 to 135 (RPVDL), Asp-316, and Ile-338 contribute to the UDP-N-acetyl-alpha-D-glucosamine site.

The protein belongs to the EPSP synthase family. MurA subfamily.

It is found in the cytoplasm. It catalyses the reaction phosphoenolpyruvate + UDP-N-acetyl-alpha-D-glucosamine = UDP-N-acetyl-3-O-(1-carboxyvinyl)-alpha-D-glucosamine + phosphate. Its pathway is cell wall biogenesis; peptidoglycan biosynthesis. Cell wall formation. Adds enolpyruvyl to UDP-N-acetylglucosamine. The polypeptide is UDP-N-acetylglucosamine 1-carboxyvinyltransferase (Methylorubrum populi (strain ATCC BAA-705 / NCIMB 13946 / BJ001) (Methylobacterium populi)).